Here is a 343-residue protein sequence, read N- to C-terminus: Glucokinase (343 aa).

Position 18–23 (18–23 (GDIGGT)) interacts with ATP.

Belongs to the bacterial glucokinase family.

The protein resides in the cytoplasm. The enzyme catalyses D-glucose + ATP = D-glucose 6-phosphate + ADP + H(+). In Brucella abortus (strain 2308), this protein is Glucokinase.